A 370-amino-acid polypeptide reads, in one-letter code: uncharacterized protein (370 aa).

A divalent metal cation is bound by residues D152, H154, D184, N215, H306, and H308.

It belongs to the metallophosphoesterase superfamily. Requires a divalent metal cation as cofactor.

This is an uncharacterized protein from Helicobacter pylori (strain J99 / ATCC 700824) (Campylobacter pylori J99).